Here is a 283-residue protein sequence, read N- to C-terminus: Pantothenate synthetase (283 aa).

30 to 37 lines the ATP pocket; the sequence is MGALHEGH. The active-site Proton donor is His-37. A (R)-pantoate-binding site is contributed by Gln-61. Gln-61 is a beta-alanine binding site. 150–153 contributes to the ATP binding site; it reads GRKD. Gln-156 is a binding site for (R)-pantoate. ATP is bound by residues Val-179 and 187–190; that span reads MSSR.

The protein belongs to the pantothenate synthetase family. In terms of assembly, homodimer.

It is found in the cytoplasm. It catalyses the reaction (R)-pantoate + beta-alanine + ATP = (R)-pantothenate + AMP + diphosphate + H(+). It participates in cofactor biosynthesis; (R)-pantothenate biosynthesis; (R)-pantothenate from (R)-pantoate and beta-alanine: step 1/1. Catalyzes the condensation of pantoate with beta-alanine in an ATP-dependent reaction via a pantoyl-adenylate intermediate. This is Pantothenate synthetase from Rhodopirellula baltica (strain DSM 10527 / NCIMB 13988 / SH1).